A 172-amino-acid polypeptide reads, in one-letter code: MAEKRNIFLIGPMGAGKSTIGRHLAEQLHMEFFDSDHEIERRSGADIGWVFDVEGEEGFRIREEKVIGDLSEQQGIVLATGGGAIKSRETRNKLSARGIVVYLETTIEKQLARTQRDKRRPLLQTEEPPREVLERLAQERNALYEEVADFVIQTDDQSAKIVANQIVKLIGM.

14–19 contributes to the ATP binding site; sequence GAGKST. Serine 18 contributes to the Mg(2+) binding site. Aspartate 36, arginine 60, and glycine 82 together coordinate substrate. Residue arginine 120 coordinates ATP. A substrate-binding site is contributed by arginine 140. Glutamine 157 is a binding site for ATP.

Belongs to the shikimate kinase family. In terms of assembly, monomer. It depends on Mg(2+) as a cofactor.

It localises to the cytoplasm. The enzyme catalyses shikimate + ATP = 3-phosphoshikimate + ADP + H(+). Its pathway is metabolic intermediate biosynthesis; chorismate biosynthesis; chorismate from D-erythrose 4-phosphate and phosphoenolpyruvate: step 5/7. Functionally, catalyzes the specific phosphorylation of the 3-hydroxyl group of shikimic acid using ATP as a cosubstrate. This Aeromonas salmonicida (strain A449) protein is Shikimate kinase.